We begin with the raw amino-acid sequence, 542 residues long: Propane 2-monooxygenase, hydroxylase component large subunit (542 aa).

Residues E97, E127, H130, E192, E226, and H229 each coordinate Fe cation.

It belongs to the TmoA/XamoA family. In terms of assembly, the propane 2-monooxygenase multicomponent enzyme system is composed of an electron transfer component and a monooxygenase component interacting with the effector protein MimD. The electron transfer component is composed of a reductase (MimB), and the monooxygenase component is formed by a large subunit (MimA) and a small subunit (MimC). Requires the presence of the chaperonin-like protein MimG to ensure a productive folding, resulting of a soluble MimA, which leads to the active form of MimABCD. The cofactor is Fe(2+).

The catalysed reaction is propane + NADH + O2 + H(+) = propan-2-ol + NAD(+) + H2O. It carries out the reaction acetone + NADH + O2 + H(+) = hydroxyacetone + NAD(+) + H2O. The enzyme catalyses butan-2-one + NADH + O2 + H(+) = 1-hydroxy-2-butanone + NAD(+) + H2O. It catalyses the reaction phenol + NADH + O2 + H(+) = hydroquinone + NAD(+) + H2O. In terms of biological role, component of the propane 2-monooxygenase multicomponent enzyme system which is involved in the degradation of propane via the O2-dependent hydroxylation of propane. Also involved in the degradation of acetone via the O2-dependent hydroxylation of acetone. Also able to catalyze the oxidation of phenol, methylethylketone (2-butanone), 1-propanol and 2-propanol. This chain is Propane 2-monooxygenase, hydroxylase component large subunit, found in Mycolicibacterium goodii (Mycobacterium goodii).